The following is a 185-amino-acid chain: Dual specificity protein phosphatase 3 (185 aa).

The Tyrosine-protein phosphatase domain maps to 28–179 (QPCNEVTPRI…LCQLNDRLAK (152 aa)). Catalysis depends on Cys124, which acts as the Phosphocysteine intermediate.

It belongs to the protein-tyrosine phosphatase family. Non-receptor class dual specificity subfamily. In terms of assembly, microtubule inner protein component of sperm flagellar doublet microtubules. Interacts with VRK3; this interaction activates DUSP3 phosphatase activity.

The protein resides in the nucleus. The protein localises to the cytoplasm. It localises to the cytoskeleton. It is found in the flagellum axoneme. It carries out the reaction O-phospho-L-tyrosyl-[protein] + H2O = L-tyrosyl-[protein] + phosphate. The catalysed reaction is O-phospho-L-seryl-[protein] + H2O = L-seryl-[protein] + phosphate. It catalyses the reaction O-phospho-L-threonyl-[protein] + H2O = L-threonyl-[protein] + phosphate. Shows activity both for tyrosine-protein phosphate and serine-protein phosphate, but displays a strong preference toward phosphotyrosines. Specifically dephosphorylates and inactivates ERK1 and ERK2. This chain is Dual specificity protein phosphatase 3 (DUSP3), found in Homo sapiens (Human).